Here is a 427-residue protein sequence, read N- to C-terminus: Trigger factor (427 aa).

The PPIase FKBP-type domain occupies 163–248; the sequence is GDTVVIDFVG…IHEVKEKEVP (86 aa).

The protein belongs to the FKBP-type PPIase family. Tig subfamily.

It is found in the cytoplasm. The catalysed reaction is [protein]-peptidylproline (omega=180) = [protein]-peptidylproline (omega=0). Functionally, involved in protein export. Acts as a chaperone by maintaining the newly synthesized protein in an open conformation. Functions as a peptidyl-prolyl cis-trans isomerase. This is Trigger factor from Streptococcus sanguinis (strain SK36).